The following is a 540-amino-acid chain: Medium/long-chain-fatty-acid--[acyl-carrier-protein] ligase FadD10 (540 aa).

Threonine 177 serves as a coordination point for Mg(2+). Residues isoleucine 226, valine 316, and serine 320 each coordinate ATP. Glutamate 321 is a binding site for Mg(2+). Aspartate 408 contributes to the ATP binding site.

Belongs to the ATP-dependent AMP-binding enzyme family. As to quaternary structure, homodimer. It depends on Mg(2+) as a cofactor.

Its subcellular location is the cytoplasm. The catalysed reaction is a medium-chain fatty acid + holo-[ACP] + ATP = a medium-chain fatty acyl-[ACP] + AMP + diphosphate. The enzyme catalyses a medium-chain fatty acid + ATP + H(+) = a medium-chain fatty acyl-AMP + diphosphate. It carries out the reaction a medium-chain fatty acyl-AMP + holo-[ACP] = a medium-chain fatty acyl-[ACP] + AMP + H(+). It catalyses the reaction a long-chain fatty acid + holo-[ACP] + ATP = a long-chain fatty acyl-[ACP] + AMP + diphosphate. The catalysed reaction is a long-chain fatty acid + ATP + H(+) = a long-chain fatty acyl-AMP + diphosphate. The enzyme catalyses a long-chain fatty acyl-AMP + holo-[ACP] = a long-chain fatty acyl-[ACP] + AMP + H(+). It carries out the reaction a (2E)-enoyl fatty acid + holo-[ACP] + ATP = a (2E)-enoyl-[ACP] + AMP + diphosphate. It catalyses the reaction a (2E)-enoyl fatty acid + ATP + H(+) = a (2E)-2-fatty-enoyl-AMP + diphosphate. The catalysed reaction is a (2E)-2-fatty-enoyl-AMP + holo-[ACP] = a (2E)-enoyl-[ACP] + AMP + H(+). The enzyme catalyses a (3R)-3-isocyanyl-fatty acid + holo-[ACP] + ATP = a (3R)-3-isocyanyl-fatty acyl-[ACP] + AMP + diphosphate. It carries out the reaction a (3R)-3-isocyanyl-fatty acid + ATP + H(+) = a (3R)-3-isocyanyl-fatty acyl-AMP + diphosphate. It catalyses the reaction a (3R)-3-isocyanyl-fatty acyl-AMP + holo-[ACP] = a (3R)-3-isocyanyl-fatty acyl-[ACP] + AMP + H(+). The protein operates within lipid metabolism; fatty acid metabolism. In terms of biological role, acyl:acyl-carrier protein ligase involved in the biosynthesis of a unique class of isonitrile lipopeptides (INLPs) that seem to function as virulence factors in M.tuberculosis and to play a role in metal acquisition. Catalyzes the activation of medium/long-chain fatty acids as acyl-adenylates (acyl-AMP), which are then transferred to the phosphopantetheine arm of the acyl-carrier protein (ACP) MT0109. Acts twice during the INLP pathway, catalyzing the activation of a (2E)-enoyl fatty acid as well as the corresponding (3R)-3-isocyanyl-fatty acid as acyl-adenylates (acyl-AMP), and then the acyl transfer to the dedicated acyl-carrier protein MT0109. The protein is Medium/long-chain-fatty-acid--[acyl-carrier-protein] ligase FadD10 (fadD10) of Mycobacterium tuberculosis (strain CDC 1551 / Oshkosh).